Here is a 522-residue protein sequence, read N- to C-terminus: Cytochrome b mRNA maturase bI3 (522 aa).

Residues 1–31 are Mitochondrial matrix-facing; sequence MTIRKSNPYLSLVNSYLMDSPQPSSMNYWWN. The interval 1-163 is cytochrome b; that stretch reads MTIRKSNPYL…MPFMGGDLVP (163 aa). The helical transmembrane segment at 32 to 52 threads the bilayer; it reads VGSLLGLCLVMQMASGMFLAM. The Mitochondrial intermembrane segment spans residues 53–84; that stretch reads HYSSSMELAFNSVEHMMRDVNAGWLMRYIHAN. Residues 85 to 105 form a helical membrane-spanning segment; the sequence is GASFFFMCLYLHMGKALYYGS. The Mitochondrial matrix portion of the chain corresponds to 106–110; the sequence is YKSPR. The helical transmembrane segment at 111–131 threads the bilayer; it reads VLVWSMGVMMFMLTMATAFMG. At 132-154 the chain is on the mitochondrial intermembrane side; the sequence is YCLVYGQMSHWGATVITNLLSAM. The chain crosses the membrane as a helical span at residues 155 to 175; the sequence is PFMGGDLVPLSIILSLYLLYI. Positions 164–522 are maturase; the sequence is LSIILSLYLL…PYMSWHQKEQ (359 aa). Residues 176–522 are Mitochondrial matrix-facing; the sequence is SLKTFMKMIF…PYMSWHQKEQ (347 aa).

In the N-terminal section; belongs to the cytochrome b family. It in the C-terminal section; belongs to the LAGLIDADG endonuclease family.

It localises to the mitochondrion inner membrane. Functionally, mitochondrial mRNA maturase required for splicing of intron 3 of the cytochrome b (COB) gene, containing its own coding sequence. In Debaryomyces hansenii (strain ATCC 36239 / CBS 767 / BCRC 21394 / JCM 1990 / NBRC 0083 / IGC 2968) (Yeast), this protein is Cytochrome b mRNA maturase bI3 (bI3).